Reading from the N-terminus, the 423-residue chain is Glutamate-1-semialdehyde 2,1-aminomutase (423 aa).

Lys-262 is modified (N6-(pyridoxal phosphate)lysine).

Belongs to the class-III pyridoxal-phosphate-dependent aminotransferase family. HemL subfamily. In terms of assembly, homodimer. Requires pyridoxal 5'-phosphate as cofactor.

The protein resides in the cytoplasm. The enzyme catalyses (S)-4-amino-5-oxopentanoate = 5-aminolevulinate. Its pathway is porphyrin-containing compound metabolism; protoporphyrin-IX biosynthesis; 5-aminolevulinate from L-glutamyl-tRNA(Glu): step 2/2. The sequence is that of Glutamate-1-semialdehyde 2,1-aminomutase from Saccharophagus degradans (strain 2-40 / ATCC 43961 / DSM 17024).